Reading from the N-terminus, the 484-residue chain is Malonate-semialdehyde dehydrogenase 1 (484 aa).

NAD(+) contacts are provided by phenylalanine 153, lysine 177, glutamate 180, arginine 181, serine 230, and threonine 252. The active-site Nucleophile is the cysteine 285. NAD(+) is bound at residue glutamate 385.

It belongs to the aldehyde dehydrogenase family. IolA subfamily. As to quaternary structure, homotetramer.

The enzyme catalyses 3-oxopropanoate + NAD(+) + CoA + H2O = hydrogencarbonate + acetyl-CoA + NADH + H(+). It carries out the reaction 2-methyl-3-oxopropanoate + NAD(+) + CoA + H2O = propanoyl-CoA + hydrogencarbonate + NADH + H(+). The protein operates within polyol metabolism; myo-inositol degradation into acetyl-CoA; acetyl-CoA from myo-inositol: step 7/7. Its function is as follows. Catalyzes the oxidation of malonate semialdehyde (MSA) and methylmalonate semialdehyde (MMSA) into acetyl-CoA and propanoyl-CoA, respectively. Is involved in a myo-inositol catabolic pathway. Bicarbonate, and not CO2, is the end-product of the enzymatic reaction. In Geobacillus thermodenitrificans (strain NG80-2), this protein is Malonate-semialdehyde dehydrogenase 1.